The chain runs to 69 residues: Protein SlyX homolog (69 aa).

Belongs to the SlyX family.

The chain is Protein SlyX homolog from Maricaulis maris (strain MCS10) (Caulobacter maris).